The chain runs to 258 residues: Acetylglutamate kinase (258 aa).

Substrate is bound by residues 44–45 (GG), Arg66, and Asn158. ATP-binding positions include 181-186 (DVSGIL) and 209-211 (IIT).

This sequence belongs to the acetylglutamate kinase family. ArgB subfamily. As to quaternary structure, homodimer.

The protein localises to the cytoplasm. The enzyme catalyses N-acetyl-L-glutamate + ATP = N-acetyl-L-glutamyl 5-phosphate + ADP. It functions in the pathway amino-acid biosynthesis; L-arginine biosynthesis; N(2)-acetyl-L-ornithine from L-glutamate: step 2/4. In terms of biological role, catalyzes the ATP-dependent phosphorylation of N-acetyl-L-glutamate. The polypeptide is Acetylglutamate kinase (Shigella flexneri serotype 5b (strain 8401)).